The following is a 447-amino-acid chain: Tektin-4 (447 aa).

2 coiled-coil regions span residues 69-144 (ADRD…ALDA) and 304-423 (FGRR…TNSL). Residues 72 to 81 (DQSERQRHES) show a composition bias toward basic and acidic residues. The segment at 72 to 104 (DQSERQRHESQQLAAETEALAQRTQQDSTRKVG) is disordered. A compositionally biased stretch (low complexity) spans 82-97 (QQLAAETEALAQRTQQ).

The protein belongs to the tektin family. Microtubule inner protein component of sperm flagellar doublet microtubules. Ubiquitinated, leading to its degradation. Deubiquitinated by USP16, promoting its stability. Expressed in trachea multiciliated cells.

The protein resides in the cytoplasm. It is found in the cytoskeleton. It localises to the cilium axoneme. Its subcellular location is the flagellum axoneme. Microtubule inner protein (MIP) part of the dynein-decorated doublet microtubules (DMTs) in cilia and flagellar axoneme. Forms filamentous polymers in the walls of ciliary and flagellar microtubules. Contributes to normal sperm motility. This Bos taurus (Bovine) protein is Tektin-4 (TEKT4).